The sequence spans 309 residues: Tagatose-6-phosphate kinase (309 aa).

It belongs to the carbohydrate kinase PfkB family. LacC subfamily.

The catalysed reaction is D-tagatofuranose 6-phosphate + ATP = D-tagatofuranose 1,6-bisphosphate + ADP + H(+). Its pathway is carbohydrate metabolism; D-tagatose 6-phosphate degradation; D-glyceraldehyde 3-phosphate and glycerone phosphate from D-tagatose 6-phosphate: step 1/2. The sequence is that of Tagatose-6-phosphate kinase from Streptococcus pyogenes serotype M18 (strain MGAS8232).